The following is a 134-amino-acid chain: ATP synthase epsilon chain (134 aa).

Belongs to the ATPase epsilon chain family. In terms of assembly, F-type ATPases have 2 components, CF(1) - the catalytic core - and CF(0) - the membrane proton channel. CF(1) has five subunits: alpha(3), beta(3), gamma(1), delta(1), epsilon(1). CF(0) has three main subunits: a, b and c.

Its subcellular location is the cell membrane. Produces ATP from ADP in the presence of a proton gradient across the membrane. This chain is ATP synthase epsilon chain, found in Carboxydothermus hydrogenoformans (strain ATCC BAA-161 / DSM 6008 / Z-2901).